We begin with the raw amino-acid sequence, 1460 residues long: CLIP-associating protein 1-A (1460 aa).

HEAT repeat units follow at residues 87–124 (TQLG…QASN) and 163–200 (LTLS…HVGE). The tract at residues 237-293 (SDKNFDDEDSVDGNRPSSASSSASSKAPQTARRGVSLGTARRPGPSSAAAKTGGTAK) is disordered. Positions 279–293 (PGPSSAAAKTGGTAK) are enriched in low complexity. HEAT repeat units follow at residues 407-442 (HGAE…IRHT) and 443-479 (HVPR…EWQT). Disordered stretches follow at residues 545-605 (SDSI…IDVN), 640-733 (IRTR…RFGI), and 778-800 (PYGM…ERSY). The segment covering 550–569 (SLPQSDRSSSSSQESLNRPL) has biased composition (low complexity). Positions 571 to 597 (TKRSPTGSTVSRASSTTSKSTPGSLQR) are enriched in polar residues. Positions 645–659 (QSSGSTTSTASTPAD) are enriched in low complexity. 2 stretches are compositionally biased toward polar residues: residues 669 to 681 (VSQS…SNSP) and 715 to 724 (QGCSRETSPS). Residues 789–800 (SDASSACSERSY) show a composition bias toward low complexity. The stretch at 942–979 (FIVDQTQTPNLKVKVAILKYIESLARQMDPTDFVNSSE) is one HEAT 5 repeat. Residues 1041-1084 (LKNSSNSSMGSPSNTIGRTPSRHSSSRASPLTSPTNCSHGGLSP) form a disordered region. Over residues 1042–1054 (KNSSNSSMGSPSN) the composition is skewed to low complexity. Polar residues predominate over residues 1066-1078 (SRASPLTSPTNCS). 2 HEAT repeats span residues 1272–1309 (LLLE…YAEL) and 1390–1427 (GLLQ…YLAQ).

The protein belongs to the CLASP family.

Its subcellular location is the cytoplasm. The protein localises to the cytoskeleton. It localises to the microtubule organizing center. The protein resides in the centrosome. It is found in the chromosome. Its subcellular location is the centromere. The protein localises to the kinetochore. It localises to the spindle. The protein resides in the golgi apparatus. It is found in the trans-Golgi network. Its function is as follows. Microtubule plus-end tracking protein that promotes the stabilization of dynamic microtubules during anaphase. Plays a crucial role in chromatin-induced microtubule formation. May also act at microtubule minus ends. May be involved in the nucleation of noncentrosomal microtubules originating from the trans-Golgi network (TGN). The chain is CLIP-associating protein 1-A (clasp1-a) from Xenopus laevis (African clawed frog).